Reading from the N-terminus, the 313-residue chain is tRNA dimethylallyltransferase (313 aa).

An ATP-binding site is contributed by 8 to 15 (GPTGTGKS). Position 10 to 15 (10 to 15 (TGTGKS)) interacts with substrate.

Belongs to the IPP transferase family. Monomer. It depends on Mg(2+) as a cofactor.

The catalysed reaction is adenosine(37) in tRNA + dimethylallyl diphosphate = N(6)-dimethylallyladenosine(37) in tRNA + diphosphate. Functionally, catalyzes the transfer of a dimethylallyl group onto the adenine at position 37 in tRNAs that read codons beginning with uridine, leading to the formation of N6-(dimethylallyl)adenosine (i(6)A). The sequence is that of tRNA dimethylallyltransferase from Mycolicibacterium gilvum (strain PYR-GCK) (Mycobacterium gilvum (strain PYR-GCK)).